The primary structure comprises 235 residues: tRNA (guanine-N(1)-)-methyltransferase (235 aa).

S-adenosyl-L-methionine-binding positions include Gly-114 and 134-139; that span reads IGDYIL.

It belongs to the RNA methyltransferase TrmD family. As to quaternary structure, homodimer.

It localises to the cytoplasm. It catalyses the reaction guanosine(37) in tRNA + S-adenosyl-L-methionine = N(1)-methylguanosine(37) in tRNA + S-adenosyl-L-homocysteine + H(+). Functionally, specifically methylates guanosine-37 in various tRNAs. This chain is tRNA (guanine-N(1)-)-methyltransferase, found in Ehrlichia ruminantium (strain Welgevonden).